Reading from the N-terminus, the 390-residue chain is Pyruvate dehydrogenase E1 component subunit alpha, somatic form, mitochondrial (390 aa).

The transit peptide at 1–29 (MRKMLAAVSRVLAGAAQKPASRVLVASRN) directs the protein to the mitochondrion. Lys63 bears the N6-acetyllysine; alternate mark. N6-succinyllysine; alternate is present on Lys63. Residues His92, Tyr118, Arg119, Ala157, Gly165, Val167, Asp196, Gly197, Ala198, Asn225, and Tyr227 each coordinate pyruvate. Thiamine diphosphate-binding residues include Tyr118 and Arg119. Gly165, Val167, Asp196, Gly197, Ala198, and Asn225 together coordinate thiamine diphosphate. Mg(2+) is bound at residue Asp196. The Mg(2+) site is built by Asn225 and Tyr227. A Phosphoserine; by PDK1 modification is found at Ser232. The residue at position 244 (Lys244) is an N6-acetyllysine; alternate. Residue Lys244 is modified to N6-succinyllysine; alternate. Position 267 is an N6-acetyllysine (Lys267). Lys277 carries the N6-succinyllysine modification. A thiamine diphosphate-binding site is contributed by His292. Ser293 is subject to Phosphoserine; by PDK1, PDK2, PDK3 and PDK4. Ser295 bears the Phosphoserine mark. Residue Ser300 is modified to Phosphoserine; by PDK1, PDK2, PDK3 and PDK4. The residue at position 301 (Tyr301) is a Phosphotyrosine. Lys313 bears the N6-acetyllysine; alternate mark. An N6-succinyllysine; alternate modification is found at Lys313. N6-acetyllysine occurs at positions 321 and 336. An N6-succinyllysine modification is found at Lys385.

As to quaternary structure, heterotetramer of two PDHA1 and two PDHB subunits. The heterotetramer interacts with DLAT, and is part of the multimeric pyruvate dehydrogenase complex that contains multiple copies of pyruvate dehydrogenase (E1), dihydrolipoamide acetyltransferase (DLAT, E2) and lipoamide dehydrogenase (DLD, E3). These subunits are bound to an inner core composed of about 48 DLAT and 12 PDHX molecules. It depends on thiamine diphosphate as a cofactor. Requires Mg(2+) as cofactor. Phosphorylation at Ser-232, Ser-293 and Ser-300 by PDK family kinases inactivates the enzyme; for this phosphorylation at a single site is sufficient. Phosphorylation at Ser-293 interferes with access to active site, and thereby inactivates the enzyme. Dephosphorylation at all three sites, i.e. at Ser-232, Ser-293 and Ser-300, is required for reactivation. In terms of processing, acetylation alters the phosphorylation pattern. Deacetylated by SIRT3. In all tissues, but in very low amount in testis.

Its subcellular location is the mitochondrion matrix. The catalysed reaction is N(6)-[(R)-lipoyl]-L-lysyl-[protein] + pyruvate + H(+) = N(6)-[(R)-S(8)-acetyldihydrolipoyl]-L-lysyl-[protein] + CO2. With respect to regulation, pyruvate dehydrogenase activity is inhibited by phosphorylation of PDHA1; it is reactivated by dephosphorylation. Functionally, the pyruvate dehydrogenase complex catalyzes the overall conversion of pyruvate to acetyl-CoA and CO(2), and thereby links the glycolytic pathway to the tricarboxylic cycle. The protein is Pyruvate dehydrogenase E1 component subunit alpha, somatic form, mitochondrial (Pdha1) of Rattus norvegicus (Rat).